Reading from the N-terminus, the 651-residue chain is Acetyl-coenzyme A synthetase 1 (651 aa).

CoA-binding positions include 191–194 (RGGK), threonine 311, and asparagine 335. ATP contacts are provided by residues 387-389 (GEP), 411-416 (DTWWQT), aspartate 500, and arginine 515. Serine 523 serves as a coordination point for CoA. Arginine 526 contributes to the ATP binding site. The Mg(2+) site is built by valine 537, histidine 539, and valine 542. Arginine 584 is a CoA binding site. Position 609 is an N6-acetyllysine (lysine 609).

Belongs to the ATP-dependent AMP-binding enzyme family. It depends on Mg(2+) as a cofactor. Post-translationally, acetylated. Deacetylation by the SIR2-homolog deacetylase activates the enzyme.

It catalyses the reaction acetate + ATP + CoA = acetyl-CoA + AMP + diphosphate. Functionally, catalyzes the conversion of acetate into acetyl-CoA (AcCoA), an essential intermediate at the junction of anabolic and catabolic pathways. AcsA undergoes a two-step reaction. In the first half reaction, AcsA combines acetate with ATP to form acetyl-adenylate (AcAMP) intermediate. In the second half reaction, it can then transfer the acetyl group from AcAMP to the sulfhydryl group of CoA, forming the product AcCoA. In Pseudomonas aeruginosa (strain ATCC 15692 / DSM 22644 / CIP 104116 / JCM 14847 / LMG 12228 / 1C / PRS 101 / PAO1), this protein is Acetyl-coenzyme A synthetase 1.